A 317-amino-acid chain; its full sequence is Transaldolase (317 aa).

The Schiff-base intermediate with substrate role is filled by Lys-132.

The protein belongs to the transaldolase family. Type 1 subfamily. Homodimer.

The protein resides in the cytoplasm. The catalysed reaction is D-sedoheptulose 7-phosphate + D-glyceraldehyde 3-phosphate = D-erythrose 4-phosphate + beta-D-fructose 6-phosphate. The protein operates within carbohydrate degradation; pentose phosphate pathway; D-glyceraldehyde 3-phosphate and beta-D-fructose 6-phosphate from D-ribose 5-phosphate and D-xylulose 5-phosphate (non-oxidative stage): step 2/3. Functionally, transaldolase is important for the balance of metabolites in the pentose-phosphate pathway. The chain is Transaldolase from Yersinia pseudotuberculosis serotype O:3 (strain YPIII).